Here is a 123-residue protein sequence, read N- to C-terminus: Glutaredoxin-like protein (123 aa).

The Glutaredoxin domain maps to 27-123 (INEVEESITN…GTLFNDLKKK (97 aa)).

This sequence belongs to the glutaredoxin family.

The sequence is that of Glutaredoxin-like protein (grxB) from Dictyostelium discoideum (Social amoeba).